A 481-amino-acid polypeptide reads, in one-letter code: Protein hedgehog (481 aa).

The N-terminal stretch at 1-19 is a signal peptide; sequence MDNQAVSALWSCASATCLS. Residues 20–90 constitute a propeptide that is removed on maturation; sequence LDAKRHSIEP…LALNFRHAHS (71 aa). The disordered stretch occupies residues 26 to 56; it reads SIEPNPDGQASPDVNNNNNNHNKSTTTVDAH. The N-palmitoyl cysteine moiety is linked to residue cysteine 91. Ca(2+) is bound by residues glutamate 155, glutamate 156, aspartate 161, threonine 191, glutamate 192, aspartate 195, and aspartate 197. The Cholesterol glycine ester moiety is linked to residue glycine 264.

It belongs to the hedgehog family. Interacts with shf. In terms of processing, the C-terminal part of the hedgehog protein precursor displays an autoproteolysis activity that results in the cleavage of the full-length protein into two parts (N-product and C-product). In addition, the C-terminal part displays a cholesterol transferase activity that results by the covalent attachment of a cholesterol moiety to the C-terminal of the newly generated N-product. The N-product is the active species in both local and long-range signaling, whereas the C-product has no signaling activity. Cholesterylation is required for N-product targeting to lipid rafts and multimerization. Post-translationally, N-palmitoylation by Rasp of the hedgehog N-product, within the secretory pathway, is required for the embryonic and larval patterning activities of the hedgehog signal.

The protein resides in the nucleus. The protein localises to the cytoplasm. It localises to the cell membrane. The enzyme catalyses glycyl-L-cysteinyl-[protein] + cholesterol + H(+) = [protein]-C-terminal glycyl cholesterol ester + N-terminal L-cysteinyl-[protein]. Its function is as follows. The C-terminal part of the hedgehog protein precursor displays an autoproteolysis activity that results in the cleavage of the full-length protein into two parts (N-product and C-product). In addition, the C-terminal part displays a cholesterol transferase activity that results by the covalent attachment of a cholesterol moiety to the C-terminal of the newly generated N-product. Once cleaved, the C-product has no signaling activity and diffuses from the cell. In terms of biological role, the dually lipidated hedgehog protein N-product is a morphogen which is essential for a variety of patterning events during development. Establishes the anterior-posterior axis of the embryonic segments and patterns the larval imaginal disks. Binds to the patched (ptc) receptor, which functions in association with smoothened (smo), to activate the transcription of target genes wingless (wg), decapentaplegic (dpp) and ptc. In the absence of hh, ptc represses the constitutive signaling activity of smo through fused (fu). Essential component of a signaling pathway which regulates the Duox-dependent gut immune response to bacterial uracil; required to activate Cad99C-dependent endosome formation, norpA-dependent Ca2+ mobilization and p38 MAPK, which are essential steps in the Duox-dependent production of reactive oxygen species (ROS) in response to intestinal bacterial infection. During photoreceptor differentiation, it up-regulates transcription of Ubr3, which in turn promotes the hh-signaling pathway by mediating the ubiquitination and degradation of cos. This is Protein hedgehog from Drosophila hydei (Fruit fly).